The sequence spans 381 residues: (S)-scoulerine 9-O-methyltransferase (381 aa).

Positions 223, 246, 266, 267, and 280 each coordinate S-adenosyl-L-methionine. Residue H284 is the Proton acceptor of the active site.

This sequence belongs to the class I-like SAM-binding methyltransferase superfamily. Cation-independent O-methyltransferase family. COMT subfamily.

It catalyses the reaction (S)-scoulerine + S-adenosyl-L-methionine = (S)-tetrahydrocolumbamine + S-adenosyl-L-homocysteine + H(+). Its function is as follows. Produces a precursor of protoberberine alkaloids. This is (S)-scoulerine 9-O-methyltransferase (SMT) from Coptis japonica (Japanese goldthread).